The primary structure comprises 122 residues: NADH-quinone oxidoreductase subunit A (122 aa).

Helical transmembrane passes span 12–32, 67–87, and 91–111; these read ILLF…AGWL, IAIL…WAVV, and IGWF…VGFI.

It belongs to the complex I subunit 3 family. As to quaternary structure, NDH-1 is composed of 14 different subunits. Subunits NuoA, H, J, K, L, M, N constitute the membrane sector of the complex.

It localises to the cell inner membrane. It catalyses the reaction a quinone + NADH + 5 H(+)(in) = a quinol + NAD(+) + 4 H(+)(out). Its function is as follows. NDH-1 shuttles electrons from NADH, via FMN and iron-sulfur (Fe-S) centers, to quinones in the respiratory chain. The immediate electron acceptor for the enzyme in this species is believed to be ubiquinone. Couples the redox reaction to proton translocation (for every two electrons transferred, four hydrogen ions are translocated across the cytoplasmic membrane), and thus conserves the redox energy in a proton gradient. The polypeptide is NADH-quinone oxidoreductase subunit A (Nitrosomonas europaea (strain ATCC 19718 / CIP 103999 / KCTC 2705 / NBRC 14298)).